Consider the following 864-residue polypeptide: Leucine--tRNA ligase (864 aa).

A 'HIGH' region motif is present at residues 42-52; that stretch reads PYPSGKLHMGH. The 'KMSKS' region signature appears at 624 to 628; sequence KMSKS. Lysine 627 lines the ATP pocket.

This sequence belongs to the class-I aminoacyl-tRNA synthetase family.

The protein resides in the cytoplasm. The catalysed reaction is tRNA(Leu) + L-leucine + ATP = L-leucyl-tRNA(Leu) + AMP + diphosphate. The polypeptide is Leucine--tRNA ligase (Burkholderia pseudomallei (strain 1106a)).